A 1028-amino-acid chain; its full sequence is Carbamoyl phosphate synthase large chain (1028 aa).

The interval 1-409 (MPPRRDLKKI…ALMKALRGLE (409 aa)) is carboxyphosphate synthetic domain. ATP contacts are provided by Arg-129, Arg-169, Gly-175, Gly-176, Glu-208, Val-210, Glu-215, Gly-241, Val-242, His-243, Gln-285, and Glu-299. Residues 133-328 (QEAMRRIDLE…IAKIAALLAV (196 aa)) form the ATP-grasp 1 domain. The Mg(2+) site is built by Gln-285, Glu-299, and Asn-301. The Mn(2+) site is built by Gln-285, Glu-299, and Asn-301. The segment at 410-549 (RDVRALAGVR…YSTYELEDEV (140 aa)) is oligomerization domain. The tract at residues 550 to 933 (WPSQKPKVVI…AYYKAELGAG (384 aa)) is carbamoyl phosphate synthetic domain. The 193-residue stretch at 674–866 (HALCQRLGIP…LAKLAALIAV (193 aa)) folds into the ATP-grasp 2 domain. The ATP site is built by Arg-710, Arg-750, Leu-752, Glu-757, Gly-782, Val-783, His-784, Ser-785, Gln-825, and Glu-837. Residues Gln-825, Glu-837, and Asn-839 each contribute to the Mg(2+) site. Residues Gln-825, Glu-837, and Asn-839 each coordinate Mn(2+). The region spanning 934-1028 (QRLPLSGQVR…QDWHQKAPRG (95 aa)) is the MGS-like domain. The allosteric domain stretch occupies residues 934–1028 (QRLPLSGQVR…QDWHQKAPRG (95 aa)).

This sequence belongs to the CarB family. Composed of two chains; the small (or glutamine) chain promotes the hydrolysis of glutamine to ammonia, which is used by the large (or ammonia) chain to synthesize carbamoyl phosphate. Tetramer of heterodimers (alpha,beta)4. Requires Mg(2+) as cofactor. It depends on Mn(2+) as a cofactor.

The catalysed reaction is hydrogencarbonate + L-glutamine + 2 ATP + H2O = carbamoyl phosphate + L-glutamate + 2 ADP + phosphate + 2 H(+). The enzyme catalyses hydrogencarbonate + NH4(+) + 2 ATP = carbamoyl phosphate + 2 ADP + phosphate + 2 H(+). Its pathway is amino-acid biosynthesis; L-arginine biosynthesis; carbamoyl phosphate from bicarbonate: step 1/1. It participates in pyrimidine metabolism; UMP biosynthesis via de novo pathway; (S)-dihydroorotate from bicarbonate: step 1/3. In terms of biological role, large subunit of the glutamine-dependent carbamoyl phosphate synthetase (CPSase). CPSase catalyzes the formation of carbamoyl phosphate from the ammonia moiety of glutamine, carbonate, and phosphate donated by ATP, constituting the first step of 2 biosynthetic pathways, one leading to arginine and/or urea and the other to pyrimidine nucleotides. The large subunit (synthetase) binds the substrates ammonia (free or transferred from glutamine from the small subunit), hydrogencarbonate and ATP and carries out an ATP-coupled ligase reaction, activating hydrogencarbonate by forming carboxy phosphate which reacts with ammonia to form carbamoyl phosphate. The chain is Carbamoyl phosphate synthase large chain from Thermus thermophilus (strain ATCC BAA-163 / DSM 7039 / HB27).